Here is a 191-residue protein sequence, read N- to C-terminus: Penicillin-binding protein activator LpoB (191 aa).

The first 16 residues, 1–16 (MKRILFVILSTMLLAS), serve as a signal peptide directing secretion. Cysteine 17 carries N-palmitoyl cysteine lipidation. Cysteine 17 carries S-diacylglycerol cysteine lipidation. The tract at residues 25–48 (QPAPVTPVEPKEKQETTPIEPSEK) is disordered.

This sequence belongs to the LpoB family. Interacts with PBP1b.

Its subcellular location is the cell outer membrane. Regulator of peptidoglycan synthesis that is essential for the function of penicillin-binding protein 1B (PBP1b). This is Penicillin-binding protein activator LpoB from Xenorhabdus nematophila (strain ATCC 19061 / DSM 3370 / CCUG 14189 / LMG 1036 / NCIMB 9965 / AN6).